The chain runs to 134 residues: Small ribosomal subunit protein bS16 (134 aa).

A disordered region spans residues 79–134; that stretch reads AGIAKRPSRNNPTKGEPGKKAQERLALAKQAEEEASAKAAEAAAAAAAPAEEAASE. Residues 115–134 are compositionally biased toward low complexity; it reads AKAAEAAAAAAAPAEEAASE.

The protein belongs to the bacterial ribosomal protein bS16 family.

The protein is Small ribosomal subunit protein bS16 of Brucella abortus (strain S19).